The sequence spans 317 residues: Ribosomal protein L11 methyltransferase (317 aa).

The S-adenosyl-L-methionine site is built by Thr158, Gly179, Asp201, and Asn244.

Belongs to the methyltransferase superfamily. PrmA family.

The protein localises to the cytoplasm. It carries out the reaction L-lysyl-[protein] + 3 S-adenosyl-L-methionine = N(6),N(6),N(6)-trimethyl-L-lysyl-[protein] + 3 S-adenosyl-L-homocysteine + 3 H(+). Functionally, methylates ribosomal protein L11. The polypeptide is Ribosomal protein L11 methyltransferase (Lactococcus lactis subsp. lactis (strain IL1403) (Streptococcus lactis)).